The chain runs to 100 residues: Tuberoinfundibular peptide of 39 residues (100 aa).

The first 30 residues, 1–30, serve as a signal peptide directing secretion; the sequence is METCQMSRSPRERLLLLLLLLLLVPWGTGP. Positions 31–59 are excised as a propeptide; that stretch reads ASGVALPLAGVFSLRAPGRAWAGLGSPLS.

This sequence belongs to the parathyroid hormone family. In terms of assembly, ligand of high affinity for the PTH2 receptor (PTH2R). Expressed in testis and, less abundantly, in liver and kidney. Expressed in seminiferous tubuli and several brain regions, including nucleus ruber, caudal paralemniscal nucleus, nucleus centralis pontis, and nucleus subparafascicularis thalami. Expressed in neurons of cerebral cortex and subcortical areas. Expressed in Purkinje cells of cerebellum.

It is found in the secreted. Functionally, plays a role as a potent and selective agonist of PTH2R resulting in adenyl cyclase activation and intracellular calcium levels elevation. Induces protein kinase C beta activation, recruitment of beta-arrestin and PTH2R internalization. May inhibit cell proliferation via its action of PTH2R activation. Neuropeptide which may also have a role in spermatogenesis. May activate nociceptors and nociceptive circuits. This chain is Tuberoinfundibular peptide of 39 residues (Pth2), found in Mus musculus (Mouse).